The primary structure comprises 569 residues: GATOR1 complex protein NPRL3 (569 aa).

Disordered stretches follow at residues 27-60 (PFQR…EQDG) and 416-477 (PSEE…GDSP). Composition is skewed to polar residues over residues 34–52 (HPAS…SNTG) and 438–468 (SLST…NSSA). A Phosphoserine modification is found at serine 476.

Belongs to the NPR3 family. Within the GATOR complex, component of the GATOR1 subcomplex, made of DEPDC5, NPRL2 and NPRL3. GATOR1 mediates the strong interaction of the GATOR complex with small GTPases Rag (RagA/RRAGA, RagB/RRAGB, RagC/RRAGC and/or RagD/RRAGD) heterodimers. GATOR1 interacts with GPR155/LYCHOS; interaction takes place in presence of cholesterol and prevents interaction between GATOR1 and KICSTOR. In terms of tissue distribution, widely expressed. Expressed in the frontal lobe cortex as well as in the temporal, parietal, and occipital lobes.

It localises to the lysosome membrane. Functionally, as a component of the GATOR1 complex functions as an inhibitor of the amino acid-sensing branch of the mTORC1 pathway. In response to amino acid depletion, the GATOR1 complex has GTPase activating protein (GAP) activity and strongly increases GTP hydrolysis by RagA/RRAGA (or RagB/RRAGB) within heterodimeric Rag complexes, thereby turning them into their inactive GDP-bound form, releasing mTORC1 from lysosomal surface and inhibiting mTORC1 signaling. In the presence of abundant amino acids, the GATOR1 complex is negatively regulated by GATOR2, the other GATOR subcomplex, in this amino acid-sensing branch of the TORC1 pathway. In Homo sapiens (Human), this protein is GATOR1 complex protein NPRL3.